The sequence spans 226 residues: MARLLQASCLLSLLLAGFLPQSRGQDKSKMDCHGGVSGTIYEYGALTIDGEEYIPFKQYIGKYVLFVNVASYUGLTGQYIELNALQEELAPFGLVLLGFPCNQFGKQEPGENSEILPSLKYVRPGGGFVPNFQLFEKGDVNGEKEQKFYTFLKNSCPPTSELLGTSDRLFWEPMKVHDIRWNFEKFLVGPDGIPVMRWHHRTTISNVKMDILSYMRRQAALGVKRK.

A signal peptide spans 1–24; that stretch reads MARLLQASCLLSLLLAGFLPQSRG. Selenocysteine 73 is a catalytic residue. Selenocysteine 73 is a non-standard amino acid (selenocysteine).

This sequence belongs to the glutathione peroxidase family. Homotetramer. In terms of tissue distribution, expressed intensively in the kidney and adrenal gland, and weakly in the cerebellum, heart, and lung. Secreted in plasma.

It is found in the secreted. It carries out the reaction 2 glutathione + H2O2 = glutathione disulfide + 2 H2O. The catalysed reaction is tert-butyl hydroperoxide + 2 glutathione = tert-butanol + glutathione disulfide + H2O. Functionally, protects cells and enzymes from oxidative damage, by catalyzing the reduction of hydrogen peroxide, lipid peroxides and organic hydroperoxide, by glutathione. This Macaca fuscata fuscata (Japanese macaque) protein is Glutathione peroxidase 3.